A 69-amino-acid polypeptide reads, in one-letter code: Large ribosomal subunit protein uL29 (69 aa).

Belongs to the universal ribosomal protein uL29 family.

The protein is Large ribosomal subunit protein uL29 of Oenococcus oeni (strain ATCC BAA-331 / PSU-1).